The following is a 248-amino-acid chain: Putative glutamine amidotransferase-like protein C13C5.04 (248 aa).

Residues 13–217 (PMVEITSAYG…VKVLRGTEVF (205 aa)) form the Glutamine amidotransferase type-1 domain.

The sequence is that of Putative glutamine amidotransferase-like protein C13C5.04 from Schizosaccharomyces pombe (strain 972 / ATCC 24843) (Fission yeast).